The following is a 673-amino-acid chain: DNA ligase (673 aa).

NAD(+)-binding positions include 32–36 (DHVYD), 81–82 (SL), and E111. The active-site N6-AMP-lysine intermediate is the K113. NAD(+) contacts are provided by R134, E171, K286, and K310. The Zn(2+) site is built by C404, C407, C422, and C428. The BRCT domain occupies 595-673 (NIIDEYKNKT…NEFWKKDNNF (79 aa)).

This sequence belongs to the NAD-dependent DNA ligase family. LigA subfamily. Mg(2+) is required as a cofactor. It depends on Mn(2+) as a cofactor.

The enzyme catalyses NAD(+) + (deoxyribonucleotide)n-3'-hydroxyl + 5'-phospho-(deoxyribonucleotide)m = (deoxyribonucleotide)n+m + AMP + beta-nicotinamide D-nucleotide.. In terms of biological role, DNA ligase that catalyzes the formation of phosphodiester linkages between 5'-phosphoryl and 3'-hydroxyl groups in double-stranded DNA using NAD as a coenzyme and as the energy source for the reaction. It is essential for DNA replication and repair of damaged DNA. The polypeptide is DNA ligase (Ureaplasma urealyticum serovar 10 (strain ATCC 33699 / Western)).